A 322-amino-acid chain; its full sequence is Protein-L-isoaspartate O-methyltransferase (322 aa).

The interval methionine 1 to proline 101 is disordered. Residues glutamate 14 to glutamate 29 show a composition bias toward basic and acidic residues. Low complexity-rich tracts occupy residues alanine 33–alanine 51 and alanine 67–glycine 91. Serine 170 is a catalytic residue.

Belongs to the methyltransferase superfamily. L-isoaspartyl/D-aspartyl protein methyltransferase family.

The protein resides in the cytoplasm. The catalysed reaction is [protein]-L-isoaspartate + S-adenosyl-L-methionine = [protein]-L-isoaspartate alpha-methyl ester + S-adenosyl-L-homocysteine. In terms of biological role, catalyzes the methyl esterification of L-isoaspartyl residues in peptides and proteins that result from spontaneous decomposition of normal L-aspartyl and L-asparaginyl residues. It plays a role in the repair and/or degradation of damaged proteins. This is Protein-L-isoaspartate O-methyltransferase from Burkholderia pseudomallei (strain 668).